Consider the following 995-residue polypeptide: Epididymis-specific alpha-mannosidase (995 aa).

The first 21 residues, Met1–Ala21, serve as a signal peptide directing secretion. Zn(2+)-binding residues include His36, Asp38, and Asp151. Residue Asp151 is the Nucleophile of the active site. Asn285 carries N-linked (GlcNAc...) asparagine glycosylation. His411 serves as a coordination point for Zn(2+). 7 N-linked (GlcNAc...) asparagine glycosylation sites follow: Asn593, Asn625, Asn657, Asn733, Asn793, Asn875, and Asn977. The tract at residues Thr956–Asn977 is disordered.

It belongs to the glycosyl hydrolase 38 family. Zn(2+) serves as cofactor. Post-translationally, processed into a 27 kDa fragment localized on the equatorial segment and the apical rim of the head of mature sperm. In terms of tissue distribution, specific to the caput and corpus of the epididymis.

The protein resides in the secreted. The catalysed reaction is Hydrolysis of terminal, non-reducing alpha-D-mannose residues in alpha-D-mannosides.. In terms of biological role, can digest both p-nitro-phenyl-alpha-D-mannoside and high mannose oligosaccharide (Man(8)-GlcNAc(2)). May be involved in sperm maturation. Has a possible role in specific sperm-egg interaction since sperm surface mannosidase acts like a receptor for mannose-containing oligosaccharides located on the zona pellucida. In Sus scrofa (Pig), this protein is Epididymis-specific alpha-mannosidase (MAN2B2).